A 236-amino-acid chain; its full sequence is UPF0173 metal-dependent hydrolase DSY1309 (236 aa).

Belongs to the UPF0173 family.

The polypeptide is UPF0173 metal-dependent hydrolase DSY1309 (Desulfitobacterium hafniense (strain Y51)).